A 307-amino-acid polypeptide reads, in one-letter code: Putative transcription factor bHLH086 (307 aa).

Disordered stretches follow at residues 1 to 49 (MSLI…DHQN) and 167 to 215 (HEST…QSLA). 2 stretches are compositionally biased toward polar residues: residues 12-28 (NYIS…SPQN) and 183-197 (GENT…SGTN). The basic motif stretch occupies residues 207–220 (SPKDPQSLAAKNRR). One can recognise a bHLH domain in the interval 207 to 256 (SPKDPQSLAAKNRRERISERLKVLQELVPNGTKVDLVTMLEKAIGYVKFL). Positions 221 to 256 (ERISERLKVLQELVPNGTKVDLVTMLEKAIGYVKFL) are helix-loop-helix motif.

In terms of assembly, homodimer. Forms heterodimers with RHD6. Interacts with TIFY10B/JAZ2, TIFY6A/JAZ4, TIFY5A/JAZ8, TIFY7/JAZ9 and TIFY9/JAZ10.

The protein resides in the nucleus. Transcription factor that is specifically required for the development of root hairs. Acts with RHD6 to positively regulate root hair development. Acts downstream of genes that regulate epidermal pattern formation, such as GL2. Acts with RHD6 as transcription factor that integrates a jasmonate (JA) signaling pathway that stimulates root hair growth. This Arabidopsis thaliana (Mouse-ear cress) protein is Putative transcription factor bHLH086.